Consider the following 791-residue polypeptide: Metabotropic glutamate receptor-like protein D (791 aa).

Positions M1–G22 are cleaved as a signal peptide. At E23–Q390 the chain is on the extracellular side. N-linked (GlcNAc...) asparagine glycans are attached at residues N72, N168, N279, N290, N306, and N349. A helical membrane pass occupies residues I391–V411. Topologically, residues V412 to S424 are cytoplasmic. A helical transmembrane segment spans residues P425–W445. Residues S446–S453 are Extracellular-facing. Residues C454–V474 form a helical membrane-spanning segment. Topologically, residues K475–N495 are cytoplasmic. Residues L496 to L516 traverse the membrane as a helical segment. Residues T517–S550 are Extracellular-facing. N545 carries an N-linked (GlcNAc...) asparagine glycan. Residues T551–W571 traverse the membrane as a helical segment. Over K572 to K585 the chain is Cytoplasmic. The chain crosses the membrane as a helical span at residues A586–I606. At S607–K615 the chain is on the extracellular side. Residues I616 to P636 form a helical membrane-spanning segment. The Cytoplasmic segment spans residues K637–N791. Disordered regions lie at residues T664–N715 and I746–N791. Over residues S674–G689 the composition is skewed to gly residues. Residues E749–N760 show a composition bias toward low complexity. Positions Q752–L781 form a coiled coil. Basic and acidic residues predominate over residues E761–E785.

In the N-terminal section; belongs to the BMP lipoprotein family. This sequence in the C-terminal section; belongs to the G-protein coupled receptor 3 family. GABA-B receptor subfamily.

It is found in the membrane. This chain is Metabotropic glutamate receptor-like protein D (grlD), found in Dictyostelium discoideum (Social amoeba).